Reading from the N-terminus, the 441-residue chain is Xylose isomerase (441 aa).

Catalysis depends on residues His-99 and Asp-102. The Mn(2+) site is built by Glu-230, Glu-266, Asp-294, Asp-305, Asp-307, and Asp-337.

It belongs to the xylose isomerase family. As to quaternary structure, homotetramer. Mn(2+) serves as cofactor.

Its subcellular location is the cytoplasm. It carries out the reaction alpha-D-xylose = alpha-D-xylulofuranose. The sequence is that of Xylose isomerase (xylA) from Geobacillus stearothermophilus (Bacillus stearothermophilus).